Here is a 64-residue protein sequence, read N- to C-terminus: Large ribosomal subunit protein bL33 (64 aa).

Belongs to the bacterial ribosomal protein bL33 family.

The protein is Large ribosomal subunit protein bL33 of Synechococcus sp. (strain JA-3-3Ab) (Cyanobacteria bacterium Yellowstone A-Prime).